The following is a 337-amino-acid chain: Homeobox protein knotted-1-like 4 (337 aa).

2 disordered regions span residues 1–56 (MEQQ…SFHE) and 159–190 (FTLD…GLPE). Low complexity predominate over residues 27 to 38 (PTSTSTSPAVPS). The region spanning 200–220 (ELKSHLLNKYSGYLSSLWREL) is the ELK domain. A DNA-binding region (homeobox; TALE-type) is located at residues 221–284 (SKKKKKGKLP…NQRKRHWKPT (64 aa)).

Belongs to the TALE/KNOX homeobox family.

The protein localises to the nucleus. The protein is Homeobox protein knotted-1-like 4 (OSH10) of Oryza sativa subsp. japonica (Rice).